The following is a 281-amino-acid chain: Protein phosphatase 2C homolog 1 (281 aa).

One can recognise a PPM-type phosphatase domain in the interval 20-281 (RVGVAENKNS…DNVTVMVVFL (262 aa)). Mn(2+) is bound by residues aspartate 58, glycine 59, aspartate 233, and aspartate 272.

Belongs to the PP2C family. As to quaternary structure, interacts with NBP2 and PBS2. It depends on Mg(2+) as a cofactor. Mn(2+) serves as cofactor.

The protein resides in the peroxisome. It carries out the reaction O-phospho-L-seryl-[protein] + H2O = L-seryl-[protein] + phosphate. The enzyme catalyses O-phospho-L-threonyl-[protein] + H2O = L-threonyl-[protein] + phosphate. Serine and threonine phosphatase. Involved in tRNA splicing and cell separation. The polypeptide is Protein phosphatase 2C homolog 1 (PTC1) (Saccharomyces cerevisiae (strain ATCC 204508 / S288c) (Baker's yeast)).